The primary structure comprises 264 residues: COP9 signalosome complex subunit 7b (264 aa).

Ala2 carries the N-acetylalanine modification. The region spanning 2-159 (AGEQKPSSNL…QLLEVDFCIG (158 aa)) is the PCI domain. Residues 194 to 237 (RANQYKENHHRTQQQVEAEVSNIKKTLKATASSSAQEMEQQLAE) are a coiled coil. Positions 223-232 (TASSSAQEME) are enriched in polar residues. Residues 223–264 (TASSSAQEMEQQLAERECPPHTEQRQPTKKMSKVKGLVSSRH) are disordered. Basic and acidic residues predominate over residues 235 to 248 (LAERECPPHTEQRQ).

The protein belongs to the CSN7/EIF3M family. CSN7 subfamily. As to quaternary structure, component of the CSN complex, composed of COPS1/GPS1, COPS2, COPS3, COPS4, COPS5, COPS6, COPS7 (COPS7A or COPS7B) and COPS8 and COPS9. In the complex, it probably interacts directly with COPS1, COPS2, COPS4, COPS5, COPS6 and COPS8. Interacts with EIF3S6.

Its subcellular location is the cytoplasm. The protein resides in the nucleus. Functionally, component of the COP9 signalosome complex (CSN), a complex involved in various cellular and developmental processes. The CSN complex is an essential regulator of the ubiquitin (Ubl) conjugation pathway by mediating the deneddylation of the cullin subunits of SCF-type E3 ligase complexes, leading to decrease the Ubl ligase activity of SCF-type complexes such as SCF, CSA or DDB2. The complex is also involved in phosphorylation of p53/TP53, JUN, I-kappa-B-alpha/NFKBIA, ITPK1 and IRF8/ICSBP, possibly via its association with CK2 and PKD kinases. CSN-dependent phosphorylation of TP53 and JUN promotes and protects degradation by the Ubl system, respectively. This Mus musculus (Mouse) protein is COP9 signalosome complex subunit 7b (Cops7b).